We begin with the raw amino-acid sequence, 1138 residues long: uncharacterized protein (1138 aa).

A signal peptide spans 1–28; sequence MKLFPRSILIILVLSFALNLGLVTKTHA. 7 helical membrane-spanning segments follow: residues 331–351, 359–379, 392–412, 494–514, 520–540, 554–574, and 699–719; these read IVTAFLTLYVMFFGFKLLLAG, YINFILKMIFVTYFSIGINIT, MIQWAFPFLLDGINGLASWVM, MLVSLALSYPLLVISVAAFMV, CMISIVILGILAPLFVPMFLF, MISFLLQPMVVVTFMITMFSV, and IKNILLALVTACFTLYLMYNF. A compositionally biased stretch (gly residues) spans 775–784; sequence DLKAGQGGGV. Disordered regions lie at residues 775–914, 958–977, and 995–1071; these read DLKA…KGTG, GGGRIRDQQGEETSERRTNA, and ERDN…KQIR. Residues 801 to 830 are compositionally biased toward low complexity; the sequence is AASGGTSAPTVTTPTASSSVATSSPKTVSS. Positions 838 to 852 are enriched in pro residues; the sequence is TPPPAPSEAVSPPPA. Residues 854-869 are compositionally biased toward polar residues; the sequence is IRTSISTPAPQSNIET. Composition is skewed to basic and acidic residues over residues 875–888, 961–977, 995–1032, and 1058–1071; these read IIRDNNQESKKEID, RIRDQQGEETSERRTNA, ERDNSVTNKFDKLADELNKSEKAKVEENKNIENDRKEN, and LKEHENPTGVKQIR.

The protein belongs to the TrbL/VirB6 family.

The protein localises to the cell membrane. This is an uncharacterized protein from Rickettsia felis (strain ATCC VR-1525 / URRWXCal2) (Rickettsia azadi).